Reading from the N-terminus, the 231-residue chain is Chromosome partition protein MukE (231 aa).

The tract at residues 211-231 (SLLADEEEQDYNEQAELEGEA) is disordered. Acidic residues predominate over residues 214–231 (ADEEEQDYNEQAELEGEA).

The protein belongs to the MukE family. As to quaternary structure, interacts, and probably forms a ternary complex, with MukF and MukB. The complex formation is stimulated by calcium or magnesium.

The protein localises to the cytoplasm. Its subcellular location is the nucleoid. Its function is as follows. Involved in chromosome condensation, segregation and cell cycle progression. May participate in facilitating chromosome segregation by condensation DNA from both sides of a centrally located replisome during cell division. Probably acts via its interaction with MukB and MukF. This chain is Chromosome partition protein MukE, found in Vibrio vulnificus (strain CMCP6).